A 179-amino-acid polypeptide reads, in one-letter code: Large ribosomal subunit protein uL5 (179 aa).

This sequence belongs to the universal ribosomal protein uL5 family. In terms of assembly, part of the 50S ribosomal subunit; part of the 5S rRNA/L5/L18/L25 subcomplex. Contacts the 5S rRNA and the P site tRNA. Forms a bridge to the 30S subunit in the 70S ribosome.

Functionally, this is one of the proteins that bind and probably mediate the attachment of the 5S RNA into the large ribosomal subunit, where it forms part of the central protuberance. In the 70S ribosome it contacts protein S13 of the 30S subunit (bridge B1b), connecting the 2 subunits; this bridge is implicated in subunit movement. Contacts the P site tRNA; the 5S rRNA and some of its associated proteins might help stabilize positioning of ribosome-bound tRNAs. The sequence is that of Large ribosomal subunit protein uL5 from Prochlorococcus marinus (strain MIT 9313).